The following is a 488-amino-acid chain: Palmitoleoyl-protein carboxylesterase notum1 (488 aa).

A signal peptide spans 1–20 (MAGALCVTLLLLLSTNTVSG). Asn-90 is a glycosylation site (N-linked (GlcNAc...) asparagine). Active-site charge relay system residues include Ser-226, Asp-334, and His-383.

The protein belongs to the pectinacetylesterase family. Notum subfamily. As to expression, expressed in the egg and through cleavage to gastrulation stages. Enriched in the animal (prospective ectoderm) and dorsal regions in early gastrula. Shows a dynamic expression during embryogenesis, in particular during neural induction and antero-posterior (AP) patterning.

Its subcellular location is the secreted. The catalysed reaction is [Wnt protein]-O-(9Z)-hexadecenoyl-L-serine + H2O = [Wnt protein]-L-serine + (9Z)-hexadecenoate + H(+). Functionally, carboxylesterase that acts as a key negative regulator of the Wnt signaling pathway by specifically mediating depalmitoleoylation of WNT proteins. Serine palmitoleoylation of WNT proteins is required for efficient binding to frizzled receptors. Functions in the prospective ectoderm and is required for neural induction. This chain is Palmitoleoyl-protein carboxylesterase notum1, found in Xenopus laevis (African clawed frog).